We begin with the raw amino-acid sequence, 360 residues long: Membrane-bound lytic murein transglycosylase C (360 aa).

The N-terminal stretch at 1-16 (MKKYLALALIAPLLVS) is a signal peptide. Cysteine 17 carries the N-palmitoyl cysteine lipid modification. Residue cysteine 17 is the site of S-diacylglycerol cysteine attachment.

Belongs to the transglycosylase Slt family.

It is found in the cell outer membrane. The enzyme catalyses Exolytic cleavage of the (1-&gt;4)-beta-glycosidic linkage between N-acetylmuramic acid (MurNAc) and N-acetylglucosamine (GlcNAc) residues in peptidoglycan, from either the reducing or the non-reducing ends of the peptidoglycan chains, with concomitant formation of a 1,6-anhydrobond in the MurNAc residue.. Functionally, murein-degrading enzyme. May play a role in recycling of muropeptides during cell elongation and/or cell division. This Klebsiella pneumoniae subsp. pneumoniae (strain ATCC 700721 / MGH 78578) protein is Membrane-bound lytic murein transglycosylase C.